The primary structure comprises 779 residues: Ribosome-releasing factor 2, mitochondrial (779 aa).

In terms of domain architecture, tr-type G spans 68–353 (AKIRNIGIMA…AVTTYLPSPE (286 aa)). Residues 77-84 (AHIDAGKT), 141-145 (DTPGH), and 195-198 (NKMD) each bind GTP.

It belongs to the TRAFAC class translation factor GTPase superfamily. Classic translation factor GTPase family. EF-G/EF-2 subfamily.

It is found in the mitochondrion. The enzyme catalyses GTP + H2O = GDP + phosphate + H(+). Mitochondrial GTPase that mediates the disassembly of ribosomes from messenger RNA at the termination of mitochondrial protein biosynthesis. Acts in collaboration with MRRF. GTP hydrolysis follows the ribosome disassembly and probably occurs on the ribosome large subunit. Not involved in the GTP-dependent ribosomal translocation step during translation elongation. This is Ribosome-releasing factor 2, mitochondrial (Gfm2) from Rattus norvegicus (Rat).